The sequence spans 276 residues: Undecaprenyl-diphosphatase 1 (276 aa).

The next 5 helical transmembrane spans lie at 85–105 (MNVV…EKTI), 108–128 (VLFA…VILW), 187–207 (VATE…TLYE), 217–237 (VDSI…AFAC), and 253–273 (FAWY…SGWI).

It belongs to the UppP family.

The protein resides in the cell inner membrane. It carries out the reaction di-trans,octa-cis-undecaprenyl diphosphate + H2O = di-trans,octa-cis-undecaprenyl phosphate + phosphate + H(+). Its function is as follows. Catalyzes the dephosphorylation of undecaprenyl diphosphate (UPP). Confers resistance to bacitracin. This is Undecaprenyl-diphosphatase 1 from Burkholderia thailandensis (strain ATCC 700388 / DSM 13276 / CCUG 48851 / CIP 106301 / E264).